The primary structure comprises 759 residues: Phosphoribosylformylglycinamidine synthase subunit PurL (759 aa).

The active site involves histidine 34. ATP is bound at residue tyrosine 37. Glutamate 95 contributes to the Mg(2+) binding site. Residues 96 to 99 (SHNH) and arginine 118 contribute to the substrate site. Residue histidine 97 is the Proton acceptor of the active site. Aspartate 119 lines the Mg(2+) pocket. Glutamine 243 lines the substrate pocket. Aspartate 271 lines the Mg(2+) pocket. A substrate-binding site is contributed by 315–317 (ESQ). A disordered region spans residues 388 to 422 (DGAPMNDLASESPTQPDRDLPDPEPSLDEAVESVV). Positions 520 and 557 each coordinate ATP. Asparagine 558 is a binding site for Mg(2+). Residue serine 560 coordinates substrate.

This sequence belongs to the FGAMS family. In terms of assembly, monomer. Part of the FGAM synthase complex composed of 1 PurL, 1 PurQ and 2 PurS subunits.

It is found in the cytoplasm. It carries out the reaction N(2)-formyl-N(1)-(5-phospho-beta-D-ribosyl)glycinamide + L-glutamine + ATP + H2O = 2-formamido-N(1)-(5-O-phospho-beta-D-ribosyl)acetamidine + L-glutamate + ADP + phosphate + H(+). It participates in purine metabolism; IMP biosynthesis via de novo pathway; 5-amino-1-(5-phospho-D-ribosyl)imidazole from N(2)-formyl-N(1)-(5-phospho-D-ribosyl)glycinamide: step 1/2. In terms of biological role, part of the phosphoribosylformylglycinamidine synthase complex involved in the purines biosynthetic pathway. Catalyzes the ATP-dependent conversion of formylglycinamide ribonucleotide (FGAR) and glutamine to yield formylglycinamidine ribonucleotide (FGAM) and glutamate. The FGAM synthase complex is composed of three subunits. PurQ produces an ammonia molecule by converting glutamine to glutamate. PurL transfers the ammonia molecule to FGAR to form FGAM in an ATP-dependent manner. PurS interacts with PurQ and PurL and is thought to assist in the transfer of the ammonia molecule from PurQ to PurL. The protein is Phosphoribosylformylglycinamidine synthase subunit PurL of Halorubrum lacusprofundi (strain ATCC 49239 / DSM 5036 / JCM 8891 / ACAM 34).